The following is a 133-amino-acid chain: MIPGEIIVKNTEIEVNKHHPETVIEVKNTGDRPIQVGSHFHFFEANKALEFDREKAYGKHLDIPAGAAVRFEPGDEKKVQLVEYSGRRKIYGFRGLVDGDIDEERVFRPNDSNQNAAVKNDAGEDNANKKGGK.

The tract at residues 106–133 is disordered; it reads VFRPNDSNQNAAVKNDAGEDNANKKGGK.

This sequence belongs to the urease beta subunit family. In terms of assembly, heterotrimer of UreA (gamma), UreB (beta) and UreC (alpha) subunits. Three heterotrimers associate to form the active enzyme.

It localises to the cytoplasm. The enzyme catalyses urea + 2 H2O + H(+) = hydrogencarbonate + 2 NH4(+). It functions in the pathway nitrogen metabolism; urea degradation; CO(2) and NH(3) from urea (urease route): step 1/1. The polypeptide is Urease subunit beta (Staphylococcus epidermidis (strain ATCC 12228 / FDA PCI 1200)).